We begin with the raw amino-acid sequence, 81 residues long: Metallocarboxypeptidase inhibitor (81 aa).

The first 15 residues, 1–15, serve as a signal peptide directing secretion; the sequence is MFLLVFLCCLHLVIS. 4 disulfides stabilise this stretch: Cys25-Cys48, Cys32-Cys76, Cys33-Cys57, and Cys36-Cys72.

Functionally, tightly binding, competitive inhibitor of different types of pancreatic-like carboxypeptidases. Inhibits human CPA4. The protein is Metallocarboxypeptidase inhibitor of Hirudo medicinalis (Medicinal leech).